Reading from the N-terminus, the 346-residue chain is KH domain-containing, RNA-binding, signal transduction-associated protein 2 (346 aa).

Positions 65-131 constitute a KH domain; that stretch reads LIPVQQYPKF…AKYAHLSNDL (67 aa). The segment at 175 to 291 is disordered; the sequence is LSYLNGSDDP…SYESYDDNYS (117 aa). Residues 195–224 are compositionally biased toward low complexity; the sequence is LRLTSTASPRGRGSAAPPAPPGRGAAAPRG. Residues 268–287 are compositionally biased toward acidic residues; it reads YGYDDGYDGEYDDQSYESYD.

This sequence belongs to the KHDRBS family.

The protein resides in the nucleus. In terms of biological role, RNA-binding protein that plays a role in the regulation of alternative splicing. This Danio rerio (Zebrafish) protein is KH domain-containing, RNA-binding, signal transduction-associated protein 2 (khdrbs2).